A 431-amino-acid polypeptide reads, in one-letter code: Arginine biosynthesis bifunctional protein ArgJ, mitochondrial (431 aa).

Substrate contacts are provided by T174, K200, T211, E297, N426, and T431. T211 acts as the Nucleophile in catalysis.

This sequence belongs to the ArgJ family. Heterodimer of an alpha and a beta chain. The alpha and beta chains are autoproteolytically processed from a single precursor protein within the mitochondrion.

Its subcellular location is the mitochondrion matrix. The catalysed reaction is N(2)-acetyl-L-ornithine + L-glutamate = N-acetyl-L-glutamate + L-ornithine. It carries out the reaction L-glutamate + acetyl-CoA = N-acetyl-L-glutamate + CoA + H(+). Its pathway is amino-acid biosynthesis; L-arginine biosynthesis; L-ornithine and N-acetyl-L-glutamate from L-glutamate and N(2)-acetyl-L-ornithine (cyclic): step 1/1. It functions in the pathway amino-acid biosynthesis; L-arginine biosynthesis; N(2)-acetyl-L-ornithine from L-glutamate: step 1/4. In terms of biological role, catalyzes two activities which are involved in the cyclic version of arginine biosynthesis: the synthesis of acetylglutamate from glutamate and acetyl-CoA, and of ornithine by transacetylation between acetylornithine and glutamate. This chain is Arginine biosynthesis bifunctional protein ArgJ, mitochondrial, found in Yarrowia lipolytica (strain CLIB 122 / E 150) (Yeast).